A 362-amino-acid chain; its full sequence is Holliday junction branch migration complex subunit RuvB (362 aa).

A large ATPase domain (RuvB-L) region spans residues 4-186 (PDRPQRLVEQ…FGIPLRMQFY (183 aa)). Residues Ile25, Arg26, Gly67, Lys70, Thr71, Thr72, 133–135 (EDF), Arg176, Tyr186, and Arg223 each bind ATP. Thr71 lines the Mg(2+) pocket. A small ATPAse domain (RuvB-S) region spans residues 187 to 257 (EPEELQLIVA…AAGGALTRLE (71 aa)). Residues 260 to 362 (RLGFDAMDRR…GTPEGEGEDV (103 aa)) are head domain (RuvB-H). The DNA site is built by Arg296, Arg315, and Arg320.

Belongs to the RuvB family. In terms of assembly, homohexamer. Forms an RuvA(8)-RuvB(12)-Holliday junction (HJ) complex. HJ DNA is sandwiched between 2 RuvA tetramers; dsDNA enters through RuvA and exits via RuvB. An RuvB hexamer assembles on each DNA strand where it exits the tetramer. Each RuvB hexamer is contacted by two RuvA subunits (via domain III) on 2 adjacent RuvB subunits; this complex drives branch migration. In the full resolvosome a probable DNA-RuvA(4)-RuvB(12)-RuvC(2) complex forms which resolves the HJ.

Its subcellular location is the cytoplasm. It catalyses the reaction ATP + H2O = ADP + phosphate + H(+). The RuvA-RuvB-RuvC complex processes Holliday junction (HJ) DNA during genetic recombination and DNA repair, while the RuvA-RuvB complex plays an important role in the rescue of blocked DNA replication forks via replication fork reversal (RFR). RuvA specifically binds to HJ cruciform DNA, conferring on it an open structure. The RuvB hexamer acts as an ATP-dependent pump, pulling dsDNA into and through the RuvAB complex. RuvB forms 2 homohexamers on either side of HJ DNA bound by 1 or 2 RuvA tetramers; 4 subunits per hexamer contact DNA at a time. Coordinated motions by a converter formed by DNA-disengaged RuvB subunits stimulates ATP hydrolysis and nucleotide exchange. Immobilization of the converter enables RuvB to convert the ATP-contained energy into a lever motion, pulling 2 nucleotides of DNA out of the RuvA tetramer per ATP hydrolyzed, thus driving DNA branch migration. The RuvB motors rotate together with the DNA substrate, which together with the progressing nucleotide cycle form the mechanistic basis for DNA recombination by continuous HJ branch migration. Branch migration allows RuvC to scan DNA until it finds its consensus sequence, where it cleaves and resolves cruciform DNA. The sequence is that of Holliday junction branch migration complex subunit RuvB from Rhodospirillum centenum (strain ATCC 51521 / SW).